We begin with the raw amino-acid sequence, 152 residues long: Diamine acetyltransferase (152 aa).

Residues 5 to 152 (FEVRKATIDD…SFLDLTPKSD (148 aa)) form the N-acetyltransferase domain. Tyrosine 127 acts as the Proton donor in catalysis.

It belongs to the acetyltransferase family. As to quaternary structure, homotetramer.

The protein resides in the cytoplasm. The enzyme catalyses an alkane-alpha,omega-diamine + acetyl-CoA = an N-acetylalkane-alpha,omega-diamine + CoA + H(+). It participates in amine and polyamine degradation; putrescine degradation; N-acetylputrescine from putrescine: step 1/1. Enzyme which catalyzes the acetylation of polyamines. Displays higher substrate specificity for spermine than for spermidine. May function to acetylate host-derived polyamines, thus alleviating the necessity for de novo synthesis of these molecules. In Cryptosporidium parvum (strain Iowa II), this protein is Diamine acetyltransferase.